Here is a 299-residue protein sequence, read N- to C-terminus: uncharacterized protein (299 aa).

The chain crosses the membrane as a helical span at residues 25-45 (LLYFFKSLAMILFFIFFSLTS).

The protein localises to the membrane. This is an uncharacterized protein from Rickettsia prowazekii (strain Madrid E).